A 495-amino-acid polypeptide reads, in one-letter code: Meiosis-specific nuclear structural protein 1 (495 aa).

Residues 1 to 315 form an interaction with BBOF1 region; sequence MASIRRTLSF…RLEEMLRQRE (315 aa). Coiled-coil stretches lie at residues 61–215 and 245–361; these read QDEQ…EKLM and IEEF…QMAL. Residues 172–199 are disordered; that stretch reads EESAAEDKRNQAKAQYSHDLEKQLEEQG.

Belongs to the MNS1 family. As to quaternary structure, able to form oligomers. Microtubule inner protein component of sperm flagellar doublet microtubules. Interacts with ODAD1. Interacts with BBOF1. As to expression, expressed in trachea multiciliated cells.

It is found in the nucleus. The protein resides in the cytoplasm. It localises to the cytoskeleton. Its subcellular location is the cilium axoneme. The protein localises to the flagellum axoneme. In terms of biological role, microtubule inner protein (MIP) part of the dynein-decorated doublet microtubules (DMTs) in cilia axoneme, which is required for motile cilia beating. May play a role in the control of meiotic division and germ cell differentiation through regulation of pairing and recombination during meiosis. Required for sperm flagella assembly. May play a role in the assembly and function of the outer dynein arm-docking complex (ODA-DC). ODA-DC mediates outer dynein arms (ODA) binding onto the axonemal doublet microtubules. This Bos taurus (Bovine) protein is Meiosis-specific nuclear structural protein 1 (MNS1).